The chain runs to 486 residues: Malonate-semialdehyde dehydrogenase (486 aa).

NAD(+)-binding residues include phenylalanine 154, lysine 178, glutamate 181, arginine 182, and serine 231. The active-site Nucleophile is cysteine 286. Glutamate 386 provides a ligand contact to NAD(+).

The protein belongs to the aldehyde dehydrogenase family. IolA subfamily. In terms of assembly, homotetramer.

The enzyme catalyses 3-oxopropanoate + NAD(+) + CoA + H2O = hydrogencarbonate + acetyl-CoA + NADH + H(+). The catalysed reaction is 2-methyl-3-oxopropanoate + NAD(+) + CoA + H2O = propanoyl-CoA + hydrogencarbonate + NADH + H(+). It functions in the pathway polyol metabolism; myo-inositol degradation into acetyl-CoA; acetyl-CoA from myo-inositol: step 7/7. Catalyzes the oxidation of malonate semialdehyde (MSA) and methylmalonate semialdehyde (MMSA) into acetyl-CoA and propanoyl-CoA, respectively. Is involved in a myo-inositol catabolic pathway. Bicarbonate, and not CO2, is the end-product of the enzymatic reaction. In Bacillus pumilus (strain SAFR-032), this protein is Malonate-semialdehyde dehydrogenase.